The primary structure comprises 504 residues: ATP synthase subunit alpha (504 aa).

169 to 176 provides a ligand contact to ATP; sequence GDRKTGKT.

It belongs to the ATPase alpha/beta chains family. F-type ATPases have 2 components, CF(1) - the catalytic core - and CF(0) - the membrane proton channel. CF(1) has five subunits: alpha(3), beta(3), gamma(1), delta(1), epsilon(1). CF(0) has three main subunits: a(1), b(2) and c(9-12). The alpha and beta chains form an alternating ring which encloses part of the gamma chain. CF(1) is attached to CF(0) by a central stalk formed by the gamma and epsilon chains, while a peripheral stalk is formed by the delta and b chains.

It is found in the cell membrane. The catalysed reaction is ATP + H2O + 4 H(+)(in) = ADP + phosphate + 5 H(+)(out). In terms of biological role, produces ATP from ADP in the presence of a proton gradient across the membrane. The alpha chain is a regulatory subunit. This is ATP synthase subunit alpha from Leuconostoc citreum (strain KM20).